A 917-amino-acid chain; its full sequence is Protein STE5 (917 aa).

2 disordered regions span residues 1-25 and 58-151; these read MMET…YSGT and FQRS…LSDN. Residues 16–25 show a composition bias toward polar residues; that stretch reads FGSSTQYSGT. Residues 69-84 are compositionally biased toward low complexity; sequence SPSPISSSTFSFSPKS. Polar residues-rich tracts occupy residues 85-110 and 118-138; these read RVTS…STDY and TSSL…NLSR. Ser-329 is modified (phosphoserine). Residues 778-794 are compositionally biased toward acidic residues; that stretch reads HDDDDEEDNDDSTDNEL. Positions 778 to 821 are disordered; it reads HDDDDEEDNDDSTDNELDNSSGSLSDAESTTTIHIDSPFDNENA. A compositionally biased stretch (polar residues) spans 799–821; it reads GSLSDAESTTTIHIDSPFDNENA.

This sequence to yeast FAR1. Post-translationally, may be regulated at the phosphorylation level, and by the mating type of the cell and depends on an intact pheromone-response pathway.

It localises to the cytoplasm. In terms of biological role, component of the pheromone signal transduction pathway. It mediates pheromone signals acting between STE20 and STE11. It is absolutely required for pheromone-induced transcription of FUS1. May play a role in cell-cycle arrest in response to pheromone. In Saccharomyces cerevisiae (strain ATCC 204508 / S288c) (Baker's yeast), this protein is Protein STE5 (STE5).